The sequence spans 262 residues: Lectin (262 aa).

Positions 1-21 (MASSVLLVLSLFLVLLLTQAS) are cleaved as a signal peptide. N-linked (GlcNAc...) asparagine glycans are attached at residues Asn-53, Asn-82, Asn-100, Asn-129, and Asn-205.

This sequence belongs to the leguminous lectin family.

Its function is as follows. This metalloglycoprotein, containing Ca(2+), Mn(2+), binds glycoconjugates containing terminal non-reducing alpha-D-GalNAc residues. This chain is Lectin, found in Phaseolus lunatus (Lima bean).